Here is an 89-residue protein sequence, read N- to C-terminus: Phosphocarrier protein HPr (89 aa).

The region spanning 2–89 is the HPr domain; the sequence is AKFSAIITDK…TMIDTALIQG (88 aa). The active-site Pros-phosphohistidine intermediate is the His-15. At Ser-46 the chain carries Phosphoserine; by HPrK/P.

This sequence belongs to the HPr family.

Its subcellular location is the cytoplasm. With respect to regulation, phosphorylation on Ser-46 inhibits the phosphoryl transfer from enzyme I to HPr. In terms of biological role, general (non sugar-specific) component of the phosphoenolpyruvate-dependent sugar phosphotransferase system (sugar PTS). This major carbohydrate active-transport system catalyzes the phosphorylation of incoming sugar substrates concomitantly with their translocation across the cell membrane. The phosphoryl group from phosphoenolpyruvate (PEP) is transferred to the phosphoryl carrier protein HPr by enzyme I. Phospho-HPr then transfers it to the PTS EIIA domain. Its function is as follows. P-Ser-HPr interacts with the catabolite control protein A (CcpA), forming a complex that binds to DNA at the catabolite response elements cre, operator sites preceding a large number of catabolite-regulated genes. Thus, P-Ser-HPr is a corepressor in carbon catabolite repression (CCR), a mechanism that allows bacteria to coordinate and optimize the utilization of available carbon sources. P-Ser-HPr also plays a role in inducer exclusion, in which it probably interacts with several non-PTS permeases and inhibits their transport activity. In Mycoplasma capricolum subsp. capricolum (strain California kid / ATCC 27343 / NCTC 10154), this protein is Phosphocarrier protein HPr (ptsH).